The following is a 200-amino-acid chain: NADH-quinone oxidoreductase subunit I 1 (200 aa).

4Fe-4S ferredoxin-type domains are found at residues 52–82 and 98–127; these read LNRH…VEGA and RVYQ…MTNE. C62, C65, C68, C72, C107, C110, C113, and C117 together coordinate [4Fe-4S] cluster. The segment at 181–200 is disordered; sequence TERQVAVSKGEKPQDEGVEA. Residues 189 to 200 show a composition bias toward basic and acidic residues; it reads KGEKPQDEGVEA.

Belongs to the complex I 23 kDa subunit family. NDH-1 is composed of 14 different subunits. Subunits NuoA, H, J, K, L, M, N constitute the membrane sector of the complex. [4Fe-4S] cluster serves as cofactor.

The protein localises to the cell membrane. The catalysed reaction is a quinone + NADH + 5 H(+)(in) = a quinol + NAD(+) + 4 H(+)(out). Its function is as follows. NDH-1 shuttles electrons from NADH, via FMN and iron-sulfur (Fe-S) centers, to quinones in the respiratory chain. The immediate electron acceptor for the enzyme in this species is believed to be ubiquinone. Couples the redox reaction to proton translocation (for every two electrons transferred, four hydrogen ions are translocated across the cytoplasmic membrane), and thus conserves the redox energy in a proton gradient. This chain is NADH-quinone oxidoreductase subunit I 1, found in Streptomyces avermitilis (strain ATCC 31267 / DSM 46492 / JCM 5070 / NBRC 14893 / NCIMB 12804 / NRRL 8165 / MA-4680).